We begin with the raw amino-acid sequence, 310 residues long: MRFRGLDLNLLVALDALMTERKLTAAARRVKLSQPAMSAAIARLRTYFGDELFSMQGRELIPTPRAEALAPAVRDALLHIQLSVIAWDPINPAQSDRRFRIILSDFMTLVFFERVVERLAREAPGVSFELLPLDDDPYELLRRGDVDFLVLPDLFMSSAHPKAKLFAEALVCVGCPTNEQLLGELSFEKYMSMGHVAAQFGRALKPSFEQWLLLEHGFKRRVELVVPGFTLIPPLLPHTNRIAIIPLRLVKYFEQTIPLRIVKHPLPPLWFTEAVQWPALHNKDPGNIWMREILLQEASRSEFQGETSLE.

In terms of domain architecture, HTH lysR-type spans L6–T63. The segment at residues L23–A42 is a DNA-binding region (H-T-H motif).

It belongs to the LysR transcriptional regulatory family.

Functionally, nodD regulates the expression of the nodABCFE genes which encode other nodulation proteins. NodD is also a negative regulator of its own expression. Binds flavonoids as inducers. This Rhizobium meliloti (strain 1021) (Ensifer meliloti) protein is Nodulation protein D 2 (nodD2).